The sequence spans 71 residues: Small ribosomal subunit protein bS21 (71 aa).

The protein belongs to the bacterial ribosomal protein bS21 family.

This chain is Small ribosomal subunit protein bS21, found in Buchnera aphidicola subsp. Baizongia pistaciae (strain Bp).